The following is a 188-amino-acid chain: MAIVSTSEFKNGLKVMLDGDPCTMLESEFVKPGKGQAFNRVKLRNLKTGRVVERTFKSGETLETADVVDVEMQYLYNDGELWHFMVPESFEQYAADQNAVADAKKWLKEQDICILTLFNNVPLAVQPPNFVELTITETDPGVRGDTSGGGGKPATLETGAVVRVPLFVQTGEVIKVDTRTGEYVSRVK.

At Lys34 the chain carries N6-(3,6-diaminohexanoyl)-5-hydroxylysine.

It belongs to the elongation factor P family. May be beta-lysylated on the epsilon-amino group of Lys-34 by the combined action of EpmA and EpmB, and then hydroxylated on the C5 position of the same residue by EpmC (if this protein is present). Lysylation is critical for the stimulatory effect of EF-P on peptide-bond formation. The lysylation moiety may extend toward the peptidyltransferase center and stabilize the terminal 3-CCA end of the tRNA. Hydroxylation of the C5 position on Lys-34 may allow additional potential stabilizing hydrogen-bond interactions with the P-tRNA.

It is found in the cytoplasm. Its pathway is protein biosynthesis; polypeptide chain elongation. Its function is as follows. Involved in peptide bond synthesis. Alleviates ribosome stalling that occurs when 3 or more consecutive Pro residues or the sequence PPG is present in a protein, possibly by augmenting the peptidyl transferase activity of the ribosome. Modification of Lys-34 is required for alleviation. This Methylococcus capsulatus (strain ATCC 33009 / NCIMB 11132 / Bath) protein is Elongation factor P.